The following is a 144-amino-acid chain: Transcriptional regulator SlyA (144 aa).

One can recognise an HTH marR-type domain in the interval 2–135 (ESPLGSDLAR…LLHLIRKLEQ (134 aa)). Residues 49 to 72 (QIQLAKAIGIEQPSLVRTLDQLEE) constitute a DNA-binding region (H-T-H motif).

This sequence belongs to the SlyA family. As to quaternary structure, homodimer.

Functionally, transcription regulator that can specifically activate or repress expression of target genes. The polypeptide is Transcriptional regulator SlyA (Klebsiella pneumoniae (strain 342)).